We begin with the raw amino-acid sequence, 66 residues long: Large ribosomal subunit protein bL31 (66 aa).

Cys-16, Cys-18, Cys-36, and Cys-39 together coordinate Zn(2+).

It belongs to the bacterial ribosomal protein bL31 family. Type A subfamily. In terms of assembly, part of the 50S ribosomal subunit. Requires Zn(2+) as cofactor.

Functionally, binds the 23S rRNA. This chain is Large ribosomal subunit protein bL31, found in Natranaerobius thermophilus (strain ATCC BAA-1301 / DSM 18059 / JW/NM-WN-LF).